A 293-amino-acid chain; its full sequence is MAWVQIRLNSTDKQAEQISDFLEEIGAVSVTFMDSQDTPIFEPLPGETRLWGNTDVVGLFDAETDMKAIVEALIASRLVEADFAHKIEQIEDKDWEREWMDNFHPMQFGKRLWICPSWREVPDSNAVNVMLDPGLAFGTGTHPTTALCLQWLDSLDLTGKTVIDFGCGSGILAIAALKLGAKQAIGIDIDPQAILASGNNAEANGVADRLQLFLAKDQPQDLQADVVVANILAGPLKELAPNIITLVKPQGDLGLSGILATQAESVCEAYAPDFNLDSVVEKEEWCRITGVKK.

The S-adenosyl-L-methionine site is built by Thr145, Gly166, Asp188, and Asn230.

It belongs to the methyltransferase superfamily. PrmA family.

The protein resides in the cytoplasm. The enzyme catalyses L-lysyl-[protein] + 3 S-adenosyl-L-methionine = N(6),N(6),N(6)-trimethyl-L-lysyl-[protein] + 3 S-adenosyl-L-homocysteine + 3 H(+). In terms of biological role, methylates ribosomal protein L11. This chain is Ribosomal protein L11 methyltransferase, found in Actinobacillus pleuropneumoniae serotype 3 (strain JL03).